A 396-amino-acid polypeptide reads, in one-letter code: L-lactate dehydrogenase (396 aa).

An FMN hydroxy acid dehydrogenase domain is found at 1-380 (MIISAASDYR…SGDSLVQELG (380 aa)). Tyr24 contributes to the substrate binding site. Residues Ser106 and Gln127 each contribute to the FMN site. Tyr129 contacts substrate. Thr155 provides a ligand contact to FMN. Arg164 provides a ligand contact to substrate. Lys251 contacts FMN. His275 acts as the Proton acceptor in catalysis. Residue Arg278 participates in substrate binding. 306–330 (DSGIRNGLDVVRMIALGADTVLLGR) serves as a coordination point for FMN.

It belongs to the FMN-dependent alpha-hydroxy acid dehydrogenase family. It depends on FMN as a cofactor.

It is found in the cell inner membrane. The catalysed reaction is (S)-lactate + A = pyruvate + AH2. Catalyzes the conversion of L-lactate to pyruvate. Is coupled to the respiratory chain. The sequence is that of L-lactate dehydrogenase from Salmonella choleraesuis (strain SC-B67).